A 274-amino-acid chain; its full sequence is NH(3)-dependent NAD(+) synthetase (274 aa).

Residue 46–53 (GISGGQDS) participates in ATP binding. Position 52 (Asp52) interacts with Mg(2+). Arg140 is a binding site for deamido-NAD(+). Thr160 serves as a coordination point for ATP. Glu165 lines the Mg(2+) pocket. Positions 173 and 180 each coordinate deamido-NAD(+). Residues Lys189 and Thr211 each contribute to the ATP site. 260–261 (HK) contributes to the deamido-NAD(+) binding site.

Belongs to the NAD synthetase family. As to quaternary structure, homodimer.

It catalyses the reaction deamido-NAD(+) + NH4(+) + ATP = AMP + diphosphate + NAD(+) + H(+). It participates in cofactor biosynthesis; NAD(+) biosynthesis; NAD(+) from deamido-NAD(+) (ammonia route): step 1/1. In terms of biological role, catalyzes the ATP-dependent amidation of deamido-NAD to form NAD. Uses ammonia as a nitrogen source. This is NH(3)-dependent NAD(+) synthetase from Streptococcus pyogenes serotype M18 (strain MGAS8232).